We begin with the raw amino-acid sequence, 321 residues long: L-carnitine dehydrogenase (321 aa).

Residue 14–19 (GSGVIG) coordinates NAD(+). The important for catalytic activity stretch occupies residues 317–321 (MTFSE).

This sequence belongs to the 3-hydroxyacyl-CoA dehydrogenase family. L-carnitine dehydrogenase subfamily. As to quaternary structure, homodimer.

The protein resides in the cytoplasm. It catalyses the reaction carnitine + NAD(+) = 3-dehydrocarnitine + NADH + H(+). The protein operates within amine and polyamine metabolism; carnitine metabolism. Its activity is regulated as follows. The enzyme activity is strongly inhibited by Ag(+), Ni(+), Hg(+), and p-chloromercuribenzoate, and partially inhibited by Li(+), Ca(2+), Mn(2+), Co(2+), Cu(2+), and Zn(2+). Catalyzes the NAD(+)-dependent oxidation of L-carnitine to 3-dehydrocarnitine. Is specific for L-carnitine and NAD(+) as substrates since D-carnitine, other carnitine analogs such as choline and betaine, and NADP(+) are not substrates. Despite a high similarity to 3-hydroxyacyl-CoA dehydrogenases, cannot dehydrogenate 3-hydroxybutylate and 3-hydroxybutyl-CoA. Is probably involved in a L-carnitine degradation pathway that allows Pseudomonas sp. strain NBRC 13558 to grow on L-carnitine as the sole source of carbon and nitrogen. This chain is L-carnitine dehydrogenase, found in Pseudomonas sp.